A 224-amino-acid polypeptide reads, in one-letter code: Germin-like protein 8-5 (224 aa).

A signal peptide spans 1-22 (MASPSSLCLLAALALISWQAMA). An intrachain disulfide couples C32 to C47. The Cupin type-1 domain maps to 62 to 212 (AKLDTPRKTN…AFQVEKGTID (151 aa)). N-linked (GlcNAc...) asparagine glycosylation is present at N76. Residues H109, H111, and E116 each coordinate Mn(2+). The N-linked (GlcNAc...) asparagine glycan is linked to N135. H157 provides a ligand contact to Mn(2+).

The protein belongs to the germin family. Oligomer (believed to be a pentamer but probably hexamer).

The protein localises to the secreted. It localises to the extracellular space. The protein resides in the apoplast. Functionally, plays a role in broad-spectrum disease resistance. Probably has no oxalate oxidase activity even if the active site is conserved. This chain is Germin-like protein 8-5, found in Oryza sativa subsp. japonica (Rice).